The primary structure comprises 651 residues: DNA ligase (651 aa).

NAD(+) contacts are provided by residues Asp-32–Asp-36, Ser-75–Leu-76, and Glu-106. The active-site N6-AMP-lysine intermediate is Lys-108. NAD(+)-binding residues include Arg-129, Glu-164, Lys-271, and Lys-295. Residues Cys-389, Cys-392, Cys-405, and Cys-411 each coordinate Zn(2+). One can recognise a BRCT domain in the interval Ser-575–Cys-651.

The protein belongs to the NAD-dependent DNA ligase family. LigA subfamily. Mg(2+) is required as a cofactor. It depends on Mn(2+) as a cofactor.

The catalysed reaction is NAD(+) + (deoxyribonucleotide)n-3'-hydroxyl + 5'-phospho-(deoxyribonucleotide)m = (deoxyribonucleotide)n+m + AMP + beta-nicotinamide D-nucleotide.. Its function is as follows. DNA ligase that catalyzes the formation of phosphodiester linkages between 5'-phosphoryl and 3'-hydroxyl groups in double-stranded DNA using NAD as a coenzyme and as the energy source for the reaction. It is essential for DNA replication and repair of damaged DNA. The polypeptide is DNA ligase (Wolbachia pipientis subsp. Culex pipiens (strain wPip)).